Here is a 362-residue protein sequence, read N- to C-terminus: 11-beta-hydroxysteroid dehydrogenase B (362 aa).

Residues 10 to 30 (FVVPPASLLMLAFTWPTLFFI) traverse the membrane as a helical; Signal-anchor for type II membrane protein segment. The short motif at 13–26 (PPASLLMLAFTWPT) is the Proline-knob element. Residue 55-81 (GASSGIGEQIAYQYAKRGANLVLVARR) participates in NADP(+) binding. Ser-185 provides a ligand contact to substrate. The Proton acceptor role is filled by Tyr-198. NADP(+) is bound by residues 198–202 (YSAAK) and Lys-202. Positions 321-362 (TGRPLLETSSPRRSAVMEGSSPRRLPPGPLTFSPAFQQQKSE) are disordered.

It belongs to the short-chain dehydrogenases/reductases (SDR) family. As to expression, expressed in seeds (at protein level). Not expressed in stem, leaf or root (at protein level).

The protein resides in the lipid droplet. It is found in the membrane. The enzyme catalyses an 11beta-hydroxysteroid + NADP(+) = an 11-oxosteroid + NADPH + H(+). It catalyses the reaction corticosterone + NADP(+) = 11-dehydrocorticosterone + NADPH + H(+). The catalysed reaction is 17beta-estradiol + NADP(+) = estrone + NADPH + H(+). Functionally, has dehydrogenase activity against corticosterone (11 beta-hydroxysteroid) and estradiol (17 beta-hydroxysteroid), with similar activities to both sterols in the presence of NADP(+), but negligible activity to either sterol in the presence of NAD(+). May be involved in signal transduction regulated by various sterols. This Sesamum indicum (Oriental sesame) protein is 11-beta-hydroxysteroid dehydrogenase B.